Reading from the N-terminus, the 420-residue chain is Glucose-1-phosphate adenylyltransferase (420 aa).

Alpha-D-glucose 1-phosphate contacts are provided by residues Tyr108, Gly173, 188-189, and Ser206; that span reads EK.

The protein belongs to the bacterial/plant glucose-1-phosphate adenylyltransferase family. In terms of assembly, homotetramer.

It catalyses the reaction alpha-D-glucose 1-phosphate + ATP + H(+) = ADP-alpha-D-glucose + diphosphate. Its pathway is glycan biosynthesis; glycogen biosynthesis. Involved in the biosynthesis of ADP-glucose, a building block required for the elongation reactions to produce glycogen. Catalyzes the reaction between ATP and alpha-D-glucose 1-phosphate (G1P) to produce pyrophosphate and ADP-Glc. The protein is Glucose-1-phosphate adenylyltransferase of Paraburkholderia phytofirmans (strain DSM 17436 / LMG 22146 / PsJN) (Burkholderia phytofirmans).